A 258-amino-acid polypeptide reads, in one-letter code: MGKTVVIKCGGSVLDELSPAFFASVNAMRKQGMEVVIVHGGGPEIGQMLKTLRVPSEFVNGLRKTTKDVLAVVEMVLSGKVNKQLASMLRQHGLPAVGVSGVDGGLLEAEPIDLAKLGYVGRVKTVRSQLLRTLLAAGYIPVISPLGIDQNGQTYNINADTAAGAVAAAIGASQLAFVTNVPGILRDGALVAEATAEMIERLIEDGVITGGMIPKVQAALSALSDALPEVMIVSGKTTFYQNGTWHGTTIRKEVGVYL.

Residues Gly41–Gly42, Arg63, and Asn156 contribute to the substrate site.

This sequence belongs to the acetylglutamate kinase family. ArgB subfamily. As to quaternary structure, homodimer.

The protein localises to the cytoplasm. The catalysed reaction is N-acetyl-L-glutamate + ATP = N-acetyl-L-glutamyl 5-phosphate + ADP. It functions in the pathway amino-acid biosynthesis; L-arginine biosynthesis; N(2)-acetyl-L-ornithine from L-glutamate: step 2/4. In terms of biological role, catalyzes the ATP-dependent phosphorylation of N-acetyl-L-glutamate. In Geobacillus stearothermophilus (Bacillus stearothermophilus), this protein is Acetylglutamate kinase.